Here is a 478-residue protein sequence, read N- to C-terminus: Probable cytosolic Fe-S cluster assembly factor CPIJ010948 (478 aa).

[4Fe-4S] cluster is bound by residues cysteine 23, cysteine 69, cysteine 72, cysteine 75, cysteine 189, cysteine 245, cysteine 396, and cysteine 400.

The protein belongs to the NARF family.

In terms of biological role, component of the cytosolic iron-sulfur (Fe/S) protein assembly machinery. Required for maturation of extramitochondrial Fe/S proteins. In Culex quinquefasciatus (Southern house mosquito), this protein is Probable cytosolic Fe-S cluster assembly factor CPIJ010948.